Reading from the N-terminus, the 1409-residue chain is DNA-directed RNA polymerase subunit beta' (1409 aa).

Zn(2+) contacts are provided by Cys-70, Cys-72, Cys-85, and Cys-88. Mg(2+) contacts are provided by Asp-460, Asp-462, and Asp-464. The Zn(2+) site is built by Cys-822, Cys-896, Cys-903, and Cys-906.

This sequence belongs to the RNA polymerase beta' chain family. The RNAP catalytic core consists of 2 alpha, 1 beta, 1 beta' and 1 omega subunit. When a sigma factor is associated with the core the holoenzyme is formed, which can initiate transcription. The cofactor is Mg(2+). It depends on Zn(2+) as a cofactor.

The enzyme catalyses RNA(n) + a ribonucleoside 5'-triphosphate = RNA(n+1) + diphosphate. In terms of biological role, DNA-dependent RNA polymerase catalyzes the transcription of DNA into RNA using the four ribonucleoside triphosphates as substrates. The protein is DNA-directed RNA polymerase subunit beta' of Methylobacillus flagellatus (strain ATCC 51484 / DSM 6875 / VKM B-1610 / KT).